Consider the following 403-residue polypeptide: tRNA methyltransferase 10 homolog C (403 aa).

The N-terminal 39 residues, 1–39 (MAAFLKMSVSVNFFRPFTRFLVPFTLHRKRNNLTILQRY), are a transit peptide targeting the mitochondrion. S84 is subject to Phosphoserine. The stretch at 138-169 (TKEKVKKARQIKKEMKAAAREEAKNIKLLETT) forms a coiled coil. Residues 191–383 (MGWKGAQAMQ…QFVPKRKHTG (193 aa)) enclose the SAM-dependent MTase TRM10-type domain.

It belongs to the class IV-like SAM-binding methyltransferase superfamily. TRM10 family. Component of mitochondrial ribonuclease P, a complex composed of TRMT10C/MRPP1, HSD17B10/MRPP2 and PRORP/MRPP3. Interacts with HSD17B10/MRPP2; forming the MRPP1-MRPP2 subcomplex of the mitochondrial ribonuclease P complex. Interacts with GRSF1.

The protein resides in the mitochondrion matrix. It localises to the mitochondrion nucleoid. The catalysed reaction is adenosine(9) in tRNA + S-adenosyl-L-methionine = N(1)-methyladenosine(9) in tRNA + S-adenosyl-L-homocysteine + H(+). It catalyses the reaction guanosine(9) in tRNA + S-adenosyl-L-methionine = N(1)-methylguanosine(9) in tRNA + S-adenosyl-L-homocysteine + H(+). The enzyme catalyses an adenosine in mRNA + S-adenosyl-L-methionine = an N(1)-methyladenosine in mRNA + S-adenosyl-L-homocysteine + H(+). Mitochondrial tRNA N(1)-methyltransferase involved in mitochondrial tRNA maturation. Component of mitochondrial ribonuclease P, a complex composed of TRMT10C/MRPP1, HSD17B10/MRPP2 and PRORP/MRPP3, which cleaves tRNA molecules in their 5'-ends. Together with HSD17B10/MRPP2, forms a subcomplex of the mitochondrial ribonuclease P, named MRPP1-MRPP2 subcomplex, which displays functions that are independent of the ribonuclease P activity. The MRPP1-MRPP2 subcomplex catalyzes the formation of N(1)-methylguanine and N(1)-methyladenine at position 9 (m1G9 and m1A9, respectively) in tRNAs; TRMT10C/MRPP1 acting as the catalytic N(1)-methyltransferase subunit. The MRPP1-MRPP2 subcomplex also acts as a tRNA maturation platform: following 5'-end cleavage by the mitochondrial ribonuclease P complex, the MRPP1-MRPP2 subcomplex enhances the efficiency of 3'-processing catalyzed by ELAC2, retains the tRNA product after ELAC2 processing and presents the nascent tRNA to the mitochondrial CCA tRNA nucleotidyltransferase TRNT1 enzyme. In addition to tRNA N(1)-methyltransferase activity, TRMT10C/MRPP1 also acts as a mRNA N(1)-methyltransferase by mediating methylation of adenosine residues at the N(1) position of MT-ND5 mRNA. Associates with mitochondrial DNA complexes at the nucleoids to initiate RNA processing and ribosome assembly. The polypeptide is tRNA methyltransferase 10 homolog C (Homo sapiens (Human)).